Here is a 918-residue protein sequence, read N- to C-terminus: NEDD4-like E3 ubiquitin-protein ligase WWP1 (918 aa).

A C2 domain is found at Met-1 to Lys-116. 3 stretches are compositionally biased toward polar residues: residues Thr-150–Gly-164, Asn-209–Gln-219, and Ser-235–Gly-258. Disordered stretches follow at residues Thr-150 to Pro-182 and Asn-209 to Arg-360. A compositionally biased stretch (low complexity) spans Thr-266–Pro-281. 4 consecutive WW domains span residues Glu-345–Pro-378, Gln-377–Met-410, Gly-452–Thr-485, and Glu-492–Asn-525. The interaction with ERBB4 stretch occupies residues Glu-345 to Asn-525. The required for interaction with and ubiquitination of AMOTL2. Required for interaction with YAP1 stretch occupies residues Glu-345–Lys-527. The HECT domain occupies Lys-584 to Glu-918. Cys-886 functions as the Glycyl thioester intermediate in the catalytic mechanism.

Interacts with the Crumbs complex components PALS1 and PATJ; interaction with the Crumbs complex is enhanced by WWP1's interaction with AMOTL2 and facilitates WWP1 localization to the plasma membrane. Interaction with the Crumbs complex promotes WWP1 monoubiquitination of AMOTL2, which activates the Hippo signaling pathway. Binds SCNN1A, SCNN1B, SCNN1G, WBP1, WBP2, DRPLA and adenovirus type 2 PIII. Interacts with TGIF. Binds KLF2 AND HIVEP3. Interacts with RNF11. Interacts with SPART. Interacts with NDFIP1 and NDFIP2; this interaction activates the E3 ubiquitin-protein ligase. Interacts with ERBB4 isoforms JM-B CYT-1 and JM-A CYT-1. Does not interact with ERB4 isoform JMA-A CYT-2. Interacts with SMAD1, SMAD2, SMAD3, SMAD5, SMAD6, SMAD7, TGFBR1 and TGFBR2. Associates with the TGFBR1:TGFBR2 receptor complex in presence of SMAD7. Interacts with SKIL isoform 1. Interacts with TP63 isoform 1 and isoform 2. Interacts (via WW domains) with ARRDC1, ARRDC2 and ARRDC3. Auto-ubiquitinated and ubiquitinated by RNF11.

It localises to the cytoplasm. The protein resides in the cell membrane. The protein localises to the nucleus. It is found in the cell junction. The enzyme catalyses S-ubiquitinyl-[E2 ubiquitin-conjugating enzyme]-L-cysteine + [acceptor protein]-L-lysine = [E2 ubiquitin-conjugating enzyme]-L-cysteine + N(6)-ubiquitinyl-[acceptor protein]-L-lysine.. It participates in protein modification; protein ubiquitination. Activated by NDFIP1- and NDFIP2-binding. E3 ubiquitin-protein ligase which accepts ubiquitin from an E2 ubiquitin-conjugating enzyme in the form of a thioester and then directly transfers the ubiquitin to targeted substrates. Ubiquitinates and promotes degradation of SMAD2 in response to TGF-beta signaling, which requires interaction with TGIF. Ubiquitinates ERBB4 isoforms JM-A CYT-1 and JM-B CYT-1, KLF2, KLF5 and TP63 and promotes their proteasomal degradation. Ubiquitinates RNF11 without targeting it for degradation. Ubiquitinates and promotes degradation of TGFBR1; the ubiquitination is enhanced by SMAD7. Ubiquitinates SMAD6 and SMAD7. Activates the Hippo signaling pathway in response to cell contact inhibition and recruitment to the Crumbs complex at the cell membrane. Monoubiquitinates AMOTL2 which facilitates its interaction with and activation of LATS2. LATS2 then phosphorylates YAP1, excluding it from the nucleus and therefore ultimately represses YAP1-driven transcription of target genes. The chain is NEDD4-like E3 ubiquitin-protein ligase WWP1 (Wwp1) from Mus musculus (Mouse).